We begin with the raw amino-acid sequence, 109 residues long: Iron-sulfur cluster assembly protein CyaY (109 aa).

Belongs to the frataxin family.

In terms of biological role, involved in iron-sulfur (Fe-S) cluster assembly. May act as a regulator of Fe-S biogenesis. In Bordetella bronchiseptica (strain ATCC BAA-588 / NCTC 13252 / RB50) (Alcaligenes bronchisepticus), this protein is Iron-sulfur cluster assembly protein CyaY.